Consider the following 144-residue polypeptide: Large ribosomal subunit protein uL16 (144 aa).

Residues 1–17 (MLQPKKTKFRRQQKGRA) are compositionally biased toward basic residues. Residues 1 to 22 (MLQPKKTKFRRQQKGRAKGNAQ) are disordered.

This sequence belongs to the universal ribosomal protein uL16 family. Part of the 50S ribosomal subunit.

Its function is as follows. Binds 23S rRNA and is also seen to make contacts with the A and possibly P site tRNAs. The chain is Large ribosomal subunit protein uL16 from Bacteroides thetaiotaomicron (strain ATCC 29148 / DSM 2079 / JCM 5827 / CCUG 10774 / NCTC 10582 / VPI-5482 / E50).